Consider the following 253-residue polypeptide: MKHIPRKRFGQHFLSDSGIIDAIVRAIAPEPGQPMVEIGPGLAALTQPLVERLGRLTVVELDRDLAARLRQHGQLDVIESDVLKVDFAQVAQALNAPKIRVVGNLPYNISTPILFHLLAHVRVIADQHFMLQKEVIDRMVAAPATSAYGRLSVMLQWRYAMENVLFVPPESFDPPPRVDSAVVRMVPHEAPEALSMPVLEELVQVAFSQRRKLLRHTLGRWLEARQFAGTFDTQRRAEEVPVSEYVALAQKCS.

S-adenosyl-L-methionine-binding residues include histidine 12, leucine 14, glycine 39, glutamate 60, aspartate 81, and asparagine 104.

Belongs to the class I-like SAM-binding methyltransferase superfamily. rRNA adenine N(6)-methyltransferase family. RsmA subfamily.

It is found in the cytoplasm. The enzyme catalyses adenosine(1518)/adenosine(1519) in 16S rRNA + 4 S-adenosyl-L-methionine = N(6)-dimethyladenosine(1518)/N(6)-dimethyladenosine(1519) in 16S rRNA + 4 S-adenosyl-L-homocysteine + 4 H(+). Specifically dimethylates two adjacent adenosines (A1518 and A1519) in the loop of a conserved hairpin near the 3'-end of 16S rRNA in the 30S particle. May play a critical role in biogenesis of 30S subunits. The sequence is that of Ribosomal RNA small subunit methyltransferase A from Acidovorax ebreus (strain TPSY) (Diaphorobacter sp. (strain TPSY)).